The primary structure comprises 124 residues: S-adenosylmethionine decarboxylase proenzyme (124 aa).

S63 (schiff-base intermediate with substrate; via pyruvic acid) is an active-site residue. S63 carries the pyruvic acid (Ser); by autocatalysis modification. H68 serves as the catalytic Proton acceptor; for processing activity. C83 acts as the Proton donor; for catalytic activity in catalysis.

Belongs to the prokaryotic AdoMetDC family. Type 1 subfamily. As to quaternary structure, heterotetramer of two alpha and two beta chains arranged as a dimer of alpha/beta heterodimers. Pyruvate serves as cofactor. Post-translationally, is synthesized initially as an inactive proenzyme. Formation of the active enzyme involves a self-maturation process in which the active site pyruvoyl group is generated from an internal serine residue via an autocatalytic post-translational modification. Two non-identical subunits are generated from the proenzyme in this reaction, and the pyruvate is formed at the N-terminus of the alpha chain, which is derived from the carboxyl end of the proenzyme. The post-translation cleavage follows an unusual pathway, termed non-hydrolytic serinolysis, in which the side chain hydroxyl group of the serine supplies its oxygen atom to form the C-terminus of the beta chain, while the remainder of the serine residue undergoes an oxidative deamination to produce ammonia and the pyruvoyl group blocking the N-terminus of the alpha chain.

It catalyses the reaction S-adenosyl-L-methionine + H(+) = S-adenosyl 3-(methylsulfanyl)propylamine + CO2. The protein operates within amine and polyamine biosynthesis; S-adenosylmethioninamine biosynthesis; S-adenosylmethioninamine from S-adenosyl-L-methionine: step 1/1. Its function is as follows. Catalyzes the decarboxylation of S-adenosylmethionine to S-adenosylmethioninamine (dcAdoMet), the propylamine donor required for the synthesis of the polyamines spermine and spermidine from the diamine putrescine. This chain is S-adenosylmethionine decarboxylase proenzyme, found in Anoxybacillus flavithermus (strain DSM 21510 / WK1).